A 263-amino-acid polypeptide reads, in one-letter code: 3-methyl-2-oxobutanoate hydroxymethyltransferase (263 aa).

Mg(2+)-binding residues include aspartate 45 and aspartate 84. 3-methyl-2-oxobutanoate-binding positions include 45-46, aspartate 84, and lysine 113; that span reads DS. Glutamate 115 is a Mg(2+) binding site. Glutamate 182 serves as the catalytic Proton acceptor.

It belongs to the PanB family. In terms of assembly, homodecamer; pentamer of dimers. Mg(2+) is required as a cofactor.

The protein localises to the cytoplasm. The enzyme catalyses 3-methyl-2-oxobutanoate + (6R)-5,10-methylene-5,6,7,8-tetrahydrofolate + H2O = 2-dehydropantoate + (6S)-5,6,7,8-tetrahydrofolate. It functions in the pathway cofactor biosynthesis; coenzyme A biosynthesis. Its function is as follows. Catalyzes the reversible reaction in which hydroxymethyl group from 5,10-methylenetetrahydrofolate is transferred onto alpha-ketoisovalerate to form ketopantoate. The chain is 3-methyl-2-oxobutanoate hydroxymethyltransferase from Ignicoccus hospitalis (strain KIN4/I / DSM 18386 / JCM 14125).